Consider the following 1263-residue polypeptide: TBC1 domain family member 9B (1263 aa).

2 GRAM domains span residues 142–209 (LKMR…EKNA) and 288–356 (ECYR…EKAD). Position 397 is a phosphothreonine (threonine 397). Residues 397-449 (TPSKQTGSSIGGTKASVSDPAPESLPTPQEASEPPASPSSPLSSPPSFSTQEI) form a disordered region. Residues serine 412, serine 433, serine 436, and serine 464 each carry the phosphoserine modification. Positions 422 to 447 (PTPQEASEPPASPSSPLSSPPSFSTQ) are enriched in low complexity. In terms of domain architecture, Rab-GAP TBC spans 509 to 696 (GIPESLRGEL…VIVDCFFYEG (188 aa)). The chain crosses the membrane as a helical span at residues 669 to 689 (LSWFLTLFLSVMPFESAVVIV). The EF-hand domain occupies 880–915 (HTPVLAGRMFRLLDQNKDSLINFKEFVTGMSGMYHG). 3 disordered regions span residues 977–1002 (EQQE…PDYR), 1075–1126 (TTKK…SGDM), and 1139–1159 (VEGG…DDET). A compositionally biased stretch (basic and acidic residues) spans 987-1002 (TPERREEKGTSPPDYR). At serine 1254 the chain carries Phosphoserine.

The protein localises to the membrane. May act as a GTPase-activating protein for Rab family protein(s). This chain is TBC1 domain family member 9B (Tbc1d9b), found in Mus musculus (Mouse).